The sequence spans 146 residues: Putative transposon Ty5-1 protein YCL075W (146 aa).

The chain is Putative transposon Ty5-1 protein YCL075W (TY5B) from Saccharomyces cerevisiae (strain ATCC 204508 / S288c) (Baker's yeast).